The chain runs to 443 residues: D-serine dehydratase (443 aa).

An N6-(pyridoxal phosphate)lysine modification is found at lysine 118.

This sequence belongs to the serine/threonine dehydratase family. DsdA subfamily. As to quaternary structure, monomer. The cofactor is pyridoxal 5'-phosphate.

The catalysed reaction is D-serine = pyruvate + NH4(+). The sequence is that of D-serine dehydratase from Photorhabdus laumondii subsp. laumondii (strain DSM 15139 / CIP 105565 / TT01) (Photorhabdus luminescens subsp. laumondii).